Here is a 180-residue protein sequence, read N- to C-terminus: Ribulose bisphosphate carboxylase small subunit, chloroplastic 2 (180 aa).

A chloroplast-targeting transit peptide spans 1 to 54; the sequence is MASMMSNAAVVGRTTPAQASMVAPFTGLKSVSAFPVTKKSNDITSIASNGGRVQ.

The protein belongs to the RuBisCO small chain family. As to quaternary structure, heterohexadecamer of 8 large and 8 small subunits.

Its subcellular location is the plastid. The protein localises to the chloroplast. In terms of biological role, ruBisCO catalyzes two reactions: the carboxylation of D-ribulose 1,5-bisphosphate, the primary event in carbon dioxide fixation, as well as the oxidative fragmentation of the pentose substrate. Both reactions occur simultaneously and in competition at the same active site. Although the small subunit is not catalytic it is essential for maximal activity. The chain is Ribulose bisphosphate carboxylase small subunit, chloroplastic 2 from Mesembryanthemum crystallinum (Common ice plant).